Consider the following 148-residue polypeptide: Deoxyuridine 5'-triphosphate nucleotidohydrolase (148 aa).

Substrate-binding positions include 68–70 (RSG), N81, 85–87 (TID), and K95.

It belongs to the dUTPase family. Requires Mg(2+) as cofactor.

It catalyses the reaction dUTP + H2O = dUMP + diphosphate + H(+). It participates in pyrimidine metabolism; dUMP biosynthesis; dUMP from dCTP (dUTP route): step 2/2. In terms of biological role, this enzyme is involved in nucleotide metabolism: it produces dUMP, the immediate precursor of thymidine nucleotides and it decreases the intracellular concentration of dUTP so that uracil cannot be incorporated into DNA. This Rickettsia peacockii (strain Rustic) protein is Deoxyuridine 5'-triphosphate nucleotidohydrolase.